We begin with the raw amino-acid sequence, 99 residues long: DNA-binding protein HmvA (99 aa).

An interaction with DNA region spans residues 52–55 (KTIK).

The protein belongs to the archaeal histone HMF family. In terms of assembly, homodimer or heterodimer with another histone. Dimers then assemble into higher oligomers, with the DNA wrapped around the protein core.

The protein resides in the cytoplasm. It localises to the chromosome. Its function is as follows. Binds and compact DNA (95 to 150 base pairs) to form nucleosome-like structures that contain positive DNA supercoils. Increases the resistance of DNA to thermal denaturation (in vitro). This Methanococcus voltae protein is DNA-binding protein HmvA (hmvA).